The following is a 360-amino-acid chain: Phenylalanine--tRNA ligase alpha subunit (360 aa).

Glu260 is a binding site for Mg(2+).

Belongs to the class-II aminoacyl-tRNA synthetase family. Phe-tRNA synthetase alpha subunit type 1 subfamily. Tetramer of two alpha and two beta subunits. It depends on Mg(2+) as a cofactor.

It is found in the cytoplasm. It carries out the reaction tRNA(Phe) + L-phenylalanine + ATP = L-phenylalanyl-tRNA(Phe) + AMP + diphosphate + H(+). This is Phenylalanine--tRNA ligase alpha subunit from Rhizobium johnstonii (strain DSM 114642 / LMG 32736 / 3841) (Rhizobium leguminosarum bv. viciae).